The chain runs to 100 residues: Sweet protein mabinlin-4 (100 aa).

Disulfide bonds link Cys-4-Cys-49, Cys-17-Cys-38, Cys-39-Cys-87, and Cys-51-Cys-95.

It belongs to the 2S seed storage albumins family. Heterodimer of a small A and a large B chain linked by disulfide bonds.

Its function is as follows. Heat stable 2S seed storage protein having sweetness-inducing activity. In Capparis masaikai (Mabinlang), this protein is Sweet protein mabinlin-4.